A 682-amino-acid chain; its full sequence is tRNA(Met) cytidine acetyltransferase TmcA (682 aa).

ATP is bound by residues Q176, 198–207 (GRGKSTLAGM), and R320. An N-acetyltransferase domain is found at 357–534 (QQQWIQQPEL…SGCYTAMAIF (178 aa)). Residues 462-464 (VAV) and E502 contribute to the acetyl-CoA site.

It belongs to the RNA cytidine acetyltransferase family. TmcA subfamily.

The protein localises to the cytoplasm. It catalyses the reaction cytidine(34) in elongator tRNA(Met) + acetyl-CoA + ATP + H2O = N(4)-acetylcytidine(34) in elongator tRNA(Met) + ADP + phosphate + CoA + H(+). Functionally, catalyzes the formation of N(4)-acetylcytidine (ac(4)C) at the wobble position of tRNA(Met), by using acetyl-CoA as an acetyl donor and ATP (or GTP). This chain is tRNA(Met) cytidine acetyltransferase TmcA, found in Photorhabdus asymbiotica subsp. asymbiotica (strain ATCC 43949 / 3105-77) (Xenorhabdus luminescens (strain 2)).